Reading from the N-terminus, the 282-residue chain is Probable septum site-determining protein MinC (282 aa).

Residues 103-147 (SQSRRGGKDEAPKEKAGKPEATAASGQTDAEAAGNTGKGKDSEGA) are disordered. The segment covering 104-120 (QSRRGGKDEAPKEKAGK) has biased composition (basic and acidic residues).

This sequence belongs to the MinC family. As to quaternary structure, interacts with MinD and FtsZ.

Cell division inhibitor that blocks the formation of polar Z ring septums. Rapidly oscillates between the poles of the cell to destabilize FtsZ filaments that have formed before they mature into polar Z rings. Prevents FtsZ polymerization. The polypeptide is Probable septum site-determining protein MinC (Cupriavidus metallidurans (strain ATCC 43123 / DSM 2839 / NBRC 102507 / CH34) (Ralstonia metallidurans)).